We begin with the raw amino-acid sequence, 549 residues long: MEADFVIIGSGSAGSAMAYRLSEDGRYSVIVIEYGVPDVGPLIQMPAALSFPMNMETYDWGFSSEPEPHIRGRSLVTPRGKVLGGSSSINGMVYVRGHACDFDHWSQSGARGWAYADVLPYFKRMENSQGGQEGWRGTNGPLYVQRGKRDNPLFHAFVEAGHQAGFEVTDDYNGEKQEGFGPMEQTIHNGRRWSAANAYLKPALKRPNVKLVKGFARKIVLEGKRAVGVEIEAGRTFSTIRARREVIIAASSINSPKLLMLSGIGPAAHLKEHGIDLVADRPGVGQNLQDHLEVYIQQECTQPITLYSKLNLFSKARIGVEWLLFKTGDGATNHFESAAFVRSKAGVEYPDIQYHFLPVAIRYDGKAAAQSHGFQAHVGPMRSKSRGSVTLRSANPREKPVIKFNYMSHEDDWADFRHCVRLTREIFGQAAFDPYRGAEIQPGAHVQTDDEIDNFIREHVESAFHPCGTCKMGAVDDPMAVVDPECRVIGVEGLRVADSSIFPRITNGNLNGPSIMVGEKASGHILGRTPLARSNQEPWINPRWQVSDR.

Residue 4 to 33 (DFVIIGSGSAGSAMAYRLSEDGRYSVIVIE) coordinates FAD. Catalysis depends on His465, which acts as the Proton acceptor.

This sequence belongs to the GMC oxidoreductase family. FAD is required as a cofactor.

The enzyme catalyses choline + A = betaine aldehyde + AH2. The catalysed reaction is betaine aldehyde + NAD(+) + H2O = glycine betaine + NADH + 2 H(+). Its pathway is amine and polyamine biosynthesis; betaine biosynthesis via choline pathway; betaine aldehyde from choline (cytochrome c reductase route): step 1/1. Involved in the biosynthesis of the osmoprotectant glycine betaine. Catalyzes the oxidation of choline to betaine aldehyde and betaine aldehyde to glycine betaine at the same rate. This chain is Oxygen-dependent choline dehydrogenase, found in Brucella melitensis biotype 1 (strain ATCC 23456 / CCUG 17765 / NCTC 10094 / 16M).